Consider the following 283-residue polypeptide: Elongation factor Ts (283 aa).

Residues 80–83 are involved in Mg(2+) ion dislocation from EF-Tu; sequence TDFV.

It belongs to the EF-Ts family.

The protein resides in the cytoplasm. Functionally, associates with the EF-Tu.GDP complex and induces the exchange of GDP to GTP. It remains bound to the aminoacyl-tRNA.EF-Tu.GTP complex up to the GTP hydrolysis stage on the ribosome. The protein is Elongation factor Ts of Actinobacillus succinogenes (strain ATCC 55618 / DSM 22257 / CCUG 43843 / 130Z).